The following is a 235-amino-acid chain: Isoprenyl transferase (235 aa).

Asp-21 is an active-site residue. Residue Asp-21 coordinates Mg(2+). Residues Gly-22–Arg-25, Trp-26, Lys-34, His-38, and Ser-66–Glu-68 contribute to the substrate site. Residue Asn-69 is the Proton acceptor of the active site. Substrate-binding positions include Trp-70, Arg-72, Arg-183, and Arg-189–Ser-191. Glu-202 is a Mg(2+) binding site.

This sequence belongs to the UPP synthase family. Homodimer. It depends on Mg(2+) as a cofactor.

Its function is as follows. Catalyzes the condensation of isopentenyl diphosphate (IPP) with allylic pyrophosphates generating different type of terpenoids. The sequence is that of Isoprenyl transferase from Rickettsia conorii (strain ATCC VR-613 / Malish 7).